The chain runs to 230 residues: Nucleoside diphosphate kinase 2, chloroplastic (230 aa).

The N-terminal 64 residues, 1-64, are a transit peptide targeting the chloroplast; the sequence is MEAMAVFSGS…SYPKTFRTRS (64 aa). 6 residues coordinate ATP: lysine 90, phenylalanine 138, arginine 166, threonine 172, arginine 183, and asparagine 193. Histidine 196 functions as the Pros-phosphohistidine intermediate in the catalytic mechanism.

The protein belongs to the NDK family. It depends on Mg(2+) as a cofactor.

The protein localises to the plastid. The protein resides in the chloroplast. It carries out the reaction a 2'-deoxyribonucleoside 5'-diphosphate + ATP = a 2'-deoxyribonucleoside 5'-triphosphate + ADP. It catalyses the reaction a ribonucleoside 5'-diphosphate + ATP = a ribonucleoside 5'-triphosphate + ADP. In terms of biological role, major role in the synthesis of nucleoside triphosphates other than ATP. The ATP gamma phosphate is transferred to the NDP beta phosphate via a ping-pong mechanism, using a phosphorylated active-site intermediate. The chain is Nucleoside diphosphate kinase 2, chloroplastic (NDPK2) from Pisum sativum (Garden pea).